A 163-amino-acid chain; its full sequence is UPF0587 protein CG4646 (163 aa).

Positions 33, 36, 68, and 71 each coordinate Zn(2+).

The protein belongs to the UPF0587 family.

This chain is UPF0587 protein CG4646, found in Drosophila melanogaster (Fruit fly).